Reading from the N-terminus, the 305-residue chain is Nitrogen assimilation regulatory protein nac (305 aa).

Positions 1–58 (MNFRRLKYFVKIVDIGSLTQAAEVLHIAQPALSQQVATLEGELNQQLLIRTKRGVTPT) constitute an HTH lysR-type domain. A DNA-binding region (H-T-H motif) is located at residues 18–37 (LTQAAEVLHIAQPALSQQVA).

The protein belongs to the LysR transcriptional regulatory family.

Transcriptional activator for the hut, put and ure operons and repressor for the gdh and gltB operons in response to nitrogen limitation. Negative regulator of its own expression. This is Nitrogen assimilation regulatory protein nac (nac) from Escherichia coli (strain K12).